A 118-amino-acid chain; its full sequence is Large ribosomal subunit protein uL22c (118 aa).

This sequence belongs to the universal ribosomal protein uL22 family. As to quaternary structure, part of the 50S ribosomal subunit.

The protein resides in the plastid. The protein localises to the chloroplast. This protein binds specifically to 23S rRNA. Its function is as follows. The globular domain of the protein is located near the polypeptide exit tunnel on the outside of the subunit, while an extended beta-hairpin is found that lines the wall of the exit tunnel in the center of the 70S ribosome. The polypeptide is Large ribosomal subunit protein uL22c (rpl22) (Physcomitrium patens (Spreading-leaved earth moss)).